Here is a 301-residue protein sequence, read N- to C-terminus: Probable alpha-L-glutamate ligase 1 (301 aa).

The region spanning 104–287 (LQLLSRKGIG…VTEPIVEYIE (184 aa)) is the ATP-grasp domain. Residues Lys141, 178-179 (EY), Asp187, and 211-213 (RSN) contribute to the ATP site. Mg(2+) contacts are provided by Asp248, Glu260, and Asn262. Mn(2+) is bound by residues Asp248, Glu260, and Asn262.

This sequence belongs to the RimK family. It depends on Mg(2+) as a cofactor. The cofactor is Mn(2+).

In Shewanella sp. (strain W3-18-1), this protein is Probable alpha-L-glutamate ligase 1.